The chain runs to 122 residues: Large ribosomal subunit protein uL14 (122 aa).

It belongs to the universal ribosomal protein uL14 family. Part of the 50S ribosomal subunit. Forms a cluster with proteins L3 and L19. In the 70S ribosome, L14 and L19 interact and together make contacts with the 16S rRNA in bridges B5 and B8.

Its function is as follows. Binds to 23S rRNA. Forms part of two intersubunit bridges in the 70S ribosome. The protein is Large ribosomal subunit protein uL14 of Mycobacterium leprae (strain TN).